The chain runs to 203 residues: uncharacterized protein (203 aa).

The N-terminal stretch at 1-31 is a signal peptide; it reads MKKTFVKKAMLTTAAMTSAALLTFGPDAASA.

This is an uncharacterized protein from Bacillus subtilis (strain 168).